We begin with the raw amino-acid sequence, 235 residues long: Putative quercetin 2,3-dioxygenase ZMO1337 (235 aa).

H57, H59, H101, and E103 together coordinate a divalent metal cation.

Belongs to the pirin family. The cofactor is a divalent metal cation.

It carries out the reaction quercetin + O2 = 2-(3,4-dihydroxybenzoyloxy)-4,6-dihydroxybenzoate + CO. Its pathway is flavonoid metabolism; quercetin degradation. Functionally, putative quercetin 2,3-dioxygenase. This Zymomonas mobilis subsp. mobilis (strain ATCC 31821 / ZM4 / CP4) protein is Putative quercetin 2,3-dioxygenase ZMO1337.